Consider the following 670-residue polypeptide: Solute carrier organic anion transporter family member 1A2 (670 aa).

At 1-20 (MGETEKRIETHRIRCLSKLK) the chain is on the cytoplasmic side. The chain crosses the membrane as a helical span at residues 21–40 (MFLLAITCAFVSKTLSGSYM). The Extracellular portion of the chain corresponds to 41–59 (NSMLTQIERQFNIPTSLVG). The helical transmembrane segment at 60–80 (FINGSFEIGNLLLIIFVSYFG) threads the bilayer. The Cytoplasmic segment spans residues 81 to 86 (TKLHRP). The helical transmembrane segment at 87–111 (IMIGIGCVVMGLGCFLKSLPHFLMN) threads the bilayer. Residues 112–155 (QYEYESTVSVSGNLSSNSFLCMENGTQILRPTQDPSECTKEVKS) are Extracellular-facing. Asparagine 124 and asparagine 135 each carry an N-linked (GlcNAc...) asparagine glycan. The helical transmembrane segment at 156-184 (LMWVYVLVGNIVRGMGETPILPLGISYIE) threads the bilayer. The Cytoplasmic segment spans residues 185 to 203 (DFAKFENSPLYIGLVETGA). The helical transmembrane segment at 204-224 (IIGPLIGLLLASFCANVYVDT) threads the bilayer. The Extracellular portion of the chain corresponds to 225–242 (GFVNTDDLIITPTDTRWV). Residues 243–267 (GAWWFGFLICAGVNVLTAIPFFFLP) traverse the membrane as a helical segment. The Cytoplasmic portion of the chain corresponds to 268–311 (NTLPKEGLETNADIIKNENEDKQKEEVKKEKYGITKDFLPFMKS). A helical transmembrane segment spans residues 312-333 (LSCNPIYMLFILVSVIQFNAFV). The Extracellular segment spans residues 334-353 (NMISFMPKYLEQQYGISSSD). The chain crosses the membrane as a helical span at residues 354-377 (AIFLMGIYNLPPICIGYIIGGLIM). Residues 378 to 381 (KKFK) are Cytoplasmic-facing. Residues 382–405 (ITVKQAAHIGCWLSLLEYLLYFLS) traverse the membrane as a helical segment. Residues 406 to 513 (FLMTCENSSV…PDCSLMLQYF (108 aa)) lie on the Extracellular side of the membrane. Asparagine 412 and asparagine 419 each carry an N-linked (GlcNAc...) asparagine glycan. One can recognise a Kazal-like domain in the interval 433 to 488 (NDIFADCNVDCNCPSKIWDPVCGNNGLSYLSACLAGCETSIGTGINMVFQNCSCIQ). 3 disulfides stabilise this stretch: cysteine 439–cysteine 469, cysteine 445–cysteine 465, and cysteine 454–cysteine 486. A helical membrane pass occupies residues 514 to 536 (LILSAMSSFIYSLAAIPGYMVLL). At 537–545 (RCMKSEEKS) the chain is on the cytoplasmic side. The chain crosses the membrane as a helical span at residues 546–571 (LGVGLHTFCTRVFAGIPAPIYFGALM). The Extracellular segment spans residues 572–605 (DSTCLHWGTLKCGESGACRIYDSTTFRYIYLGLP). Residues 606 to 623 (AALRGSSFVPALIILILL) traverse the membrane as a helical segment. The Cytoplasmic segment spans residues 624–670 (RKCHLPGENASSGTELIETKVKGKENECKDIYQKSTVLKDDELKTKL).

Belongs to the organo anion transporter (TC 2.A.60) family. In terms of tissue distribution, higher expression in the brain than in liver and kidney. Expressed in brain neurons in both cortex and hippocampus. Expressed in placental trophoblasts. Also expressed in lung and testes at lower levels. Expressed in the eye (at protein level). Expressed in the retina in the outer and inner nuclear layers, the inner plexiform layer and the ganglion cell layer. Expressed in liver and prostate. In testis, primarily localized to the basal membrane of Sertoli cells and weakly expressed in Leydig cells and within the tubules. Expressed in fetal brain and liver.

It localises to the cell membrane. Its subcellular location is the basal cell membrane. The catalysed reaction is taurocholate(out) = taurocholate(in). It carries out the reaction glycocholate(out) = glycocholate(in). The enzyme catalyses taurochenodeoxycholate(out) = taurochenodeoxycholate(in). It catalyses the reaction tauroursodeoxycholate(out) = tauroursodeoxycholate(in). The catalysed reaction is dehydroepiandrosterone 3-sulfate(out) = dehydroepiandrosterone 3-sulfate(in). It carries out the reaction estrone 3-sulfate(out) = estrone 3-sulfate(in). The enzyme catalyses 3,3',5'-triiodo-L-thyronine(out) = 3,3',5'-triiodo-L-thyronine(in). It catalyses the reaction L-thyroxine(out) = L-thyroxine(in). The catalysed reaction is taurodeoxycholate(out) = taurodeoxycholate(in). It carries out the reaction glycodeoxycholate(out) = glycodeoxycholate(in). The enzyme catalyses glycochenodeoxycholate(out) = glycochenodeoxycholate(in). It catalyses the reaction glycoursodeoxycholate(out) = glycoursodeoxycholate(in). The catalysed reaction is 17beta-estradiol 17-O-(beta-D-glucuronate)(out) = 17beta-estradiol 17-O-(beta-D-glucuronate)(in). It carries out the reaction prostaglandin E2(out) = prostaglandin E2(in). The enzyme catalyses substance P(out) = substance P(in). Its activity is regulated as follows. Transport activity is inhibited by the grapefruit juice component naringin. Na(+)-independent transporter that mediates the cellular uptake of a broad range of organic anions such as the endogenous bile salts cholate and deoxycholate, either in their unconjugated or conjugated forms (taurocholate and glycocholate), at the plasmam membrane. Responsible for intestinal absorption of bile acids. Transports dehydroepiandrosterone 3-sulfate (DHEAS), a major circulating steroid secreted by the adrenal cortex, as well as estrone 3-sulfate and 17beta-estradiol 17-O-(beta-D-glucuronate). Mediates apical uptake of all-trans-retinol (atROL) across human retinal pigment epithelium, which is essential to maintaining the integrity of the visual cycle and thus vision. Involved in the uptake of clinically used drugs. Capable of thyroid hormone transport (both T3 or 3,3',5'-triiodo-L-thyronine, and T4 or L-tyroxine). Also transports prostaglandin E2. Plays roles in blood-brain and -cerebrospinal fluid barrier transport of organic anions and signal mediators, and in hormone uptake by neural cells. May also play a role in the reuptake of neuropeptides such as substance P/TAC1 and vasoactive intestinal peptide/VIP released from retinal neurons. May play an important role in plasma and tissue distribution of the structurally diverse chemotherapeutic drugs methotrexate and paclitaxel. Shows a pH-sensitive substrate specificity which may be ascribed to the protonation state of the binding site and leads to a stimulation of substrate transport in an acidic microenvironment. Hydrogencarbonate/HCO3(-) acts as the probable counteranion that exchanges for organic anions. May contribute to regulate the transport of organic compounds in testis across the blood-testis-barrier. The polypeptide is Solute carrier organic anion transporter family member 1A2 (SLCO1A2) (Homo sapiens (Human)).